Consider the following 259-residue polypeptide: 1,2-dihydroxy-1,2-dihydronaphthalene dehydrogenase (259 aa).

8 to 32 contributes to the NAD(+) binding site; sequence SITGAGSGIGLELVRSFKSAGYYVS. Residue serine 140 coordinates substrate. Catalysis depends on tyrosine 153, which acts as the Proton acceptor.

The protein belongs to the short-chain dehydrogenases/reductases (SDR) family.

The catalysed reaction is (1R,2S)-1,2-dihydronaphthalene-1,2-diol + NAD(+) = naphthalene-1,2-diol + NADH + H(+). The enzyme catalyses cis-1,2-dihydroxy-1,2-dihydrodibenzothiophene + NAD(+) = 1,2-dihydroxydibenzothiophene + NADH + H(+). It functions in the pathway aromatic compound metabolism; naphthalene degradation. Functionally, catalyzes the oxidation of naphthalene dihydrodiol into 1,2-dihydroxynaphthalene. In Pseudomonas sp. (strain C18), this protein is 1,2-dihydroxy-1,2-dihydronaphthalene dehydrogenase (doxE).